A 291-amino-acid chain; its full sequence is uncharacterized protein (291 aa).

4 consecutive transmembrane segments (helical) span residues 13–33, 84–104, 111–131, and 219–239; these read IILIVFSLVCLHWFFILSITI, IVLFICYILTFIFNLIMIGII, LLHLIIAILIWLAILYLFIII, and LIYCTYTIIGIIFIISFIYYL.

It localises to the cell membrane. This is an uncharacterized protein from Ureaplasma parvum serovar 3 (strain ATCC 700970).